Reading from the N-terminus, the 389-residue chain is Trans-2-enoyl-CoA reductase [NADH] (389 aa).

Residues 47 to 52 (GASTGY), 73 to 74 (FE), 110 to 111 (DA), and 138 to 139 (LA) contribute to the NAD(+) site. Y224 serves as a coordination point for substrate. The active-site Proton donor is the Y234. Residues K243 and 272 to 274 (LVT) each bind NAD(+).

It belongs to the TER reductase family. As to quaternary structure, monomer.

The enzyme catalyses a 2,3-saturated acyl-CoA + NAD(+) = a (2E)-enoyl-CoA + NADH + H(+). It participates in lipid metabolism; fatty acid biosynthesis. In terms of biological role, involved in the fatty acid synthesis (FAS II). Catalyzes the reduction of a carbon-carbon double bond in an enoyl moiety that is covalently linked to a coenzyme A (CoA). In Clostridium perfringens (strain SM101 / Type A), this protein is Trans-2-enoyl-CoA reductase [NADH].